We begin with the raw amino-acid sequence, 597 residues long: Translation initiation factor IF-2 (597 aa).

Composition is skewed to low complexity over residues 57 to 73 (GGDAAPAAASAPAAATA) and 81 to 95 (TPAAAAQADAEPASD). The interval 57-96 (GGDAAPAAASAPAAATAEPEEADETPAAAAQADAEPASDL) is disordered. Residues 98-271 (HRAPVVTIMG…ELEDLRADPK (174 aa)) form the tr-type G domain. Residues 107-114 (GHVDHGKT) are G1. 107 to 114 (GHVDHGKT) is a GTP binding site. The segment at 132–136 (GITQH) is G2. Positions 153-156 (DTPG) are G3. Residues 153-157 (DTPGH) and 207-210 (NKVD) contribute to the GTP site. The interval 207–210 (NKVD) is G4. Residues 243–245 (SAK) form a G5 region.

It belongs to the TRAFAC class translation factor GTPase superfamily. Classic translation factor GTPase family. IF-2 subfamily.

It localises to the cytoplasm. One of the essential components for the initiation of protein synthesis. Protects formylmethionyl-tRNA from spontaneous hydrolysis and promotes its binding to the 30S ribosomal subunits. Also involved in the hydrolysis of GTP during the formation of the 70S ribosomal complex. The sequence is that of Translation initiation factor IF-2 from Deinococcus radiodurans (strain ATCC 13939 / DSM 20539 / JCM 16871 / CCUG 27074 / LMG 4051 / NBRC 15346 / NCIMB 9279 / VKM B-1422 / R1).